Consider the following 595-residue polypeptide: uncharacterized protein (595 aa).

9 consecutive transmembrane segments (helical) span residues 64–84 (VVFL…LIVF), 86–106 (IFYA…IGVL), 239–259 (FYVI…PVAS), 281–301 (FYLW…GILP), 334–354 (VHFI…LFFI), 368–388 (MFGI…HFII), 504–524 (FIYV…SYIM), 547–567 (YLFQ…GILT), and 571–591 (IIAG…LFKF).

The protein to M.jannaschii FlaJ.

Its subcellular location is the cell membrane. This is an uncharacterized protein from Methanocaldococcus jannaschii (strain ATCC 43067 / DSM 2661 / JAL-1 / JCM 10045 / NBRC 100440) (Methanococcus jannaschii).